The following is a 264-amino-acid chain: Hemin import ATP-binding protein HmuV (264 aa).

Residues 2 to 241 form the ABC transporter domain; that stretch reads IEVSGVSVRL…ETMLSVFGLR (240 aa). 34 to 41 provides a ligand contact to ATP; the sequence is GPNGSGKT.

The protein belongs to the ABC transporter superfamily. Heme (hemin) importer (TC 3.A.1.14.5) family. In terms of assembly, the complex is composed of two ATP-binding proteins (HmuV), two transmembrane proteins (HmuU) and a solute-binding protein (HmuT).

It is found in the cell inner membrane. Its function is as follows. Part of the ABC transporter complex HmuTUV involved in hemin import. Responsible for energy coupling to the transport system. The polypeptide is Hemin import ATP-binding protein HmuV (Rhizobium leguminosarum).